Here is a 56-residue protein sequence, read N- to C-terminus: Large ribosomal subunit protein bL32 (56 aa).

A disordered region spans residues 1–27 (MAVQQNKKSRSRRDMRRSHDALTTAAV). Basic residues predominate over residues 7 to 16 (KKSRSRRDMR).

It belongs to the bacterial ribosomal protein bL32 family.

This Actinobacillus pleuropneumoniae serotype 7 (strain AP76) protein is Large ribosomal subunit protein bL32.